The sequence spans 138 residues: Putative pre-16S rRNA nuclease (138 aa).

Belongs to the YqgF nuclease family.

The protein resides in the cytoplasm. In terms of biological role, could be a nuclease involved in processing of the 5'-end of pre-16S rRNA. The polypeptide is Putative pre-16S rRNA nuclease (Escherichia fergusonii (strain ATCC 35469 / DSM 13698 / CCUG 18766 / IAM 14443 / JCM 21226 / LMG 7866 / NBRC 102419 / NCTC 12128 / CDC 0568-73)).